We begin with the raw amino-acid sequence, 328 residues long: V-set and immunoglobulin domain-containing protein 2 (328 aa).

The first 24 residues, 1–24 (MAWPLVGAFLCGHLLGFVCLSGLA), serve as a signal peptide directing secretion. An Ig-like V-type domain is found at 25–138 (VEVTVPTEPL…DFYTNGLGLI (114 aa)). The Extracellular portion of the chain corresponds to 25 to 244 (VEVTVPTEPL…VTDSSEGRVA (220 aa)). C46 and C122 are joined by a disulfide. N139, N207, and N232 each carry an N-linked (GlcNAc...) asparagine glycan. Residues 145–234 (PPSHPLCSQS…GSASCELNLS (90 aa)) enclose the Ig-like C2-type domain. Residues C167 and C218 are joined by a disulfide bond. Residues 245-265 (GTLIGVLLGVLLLSVAAFCLI) traverse the membrane as a helical segment. Residues 266-328 (RFQKERKKEP…TTKSKLSMVV (63 aa)) lie on the Cytoplasmic side of the membrane.

In terms of tissue distribution, expressed in the stomach, colon and prostate.

It is found in the membrane. This Mus musculus (Mouse) protein is V-set and immunoglobulin domain-containing protein 2 (Vsig2).